Here is a 351-residue protein sequence, read N- to C-terminus: Anthranilate phosphoribosyltransferase (351 aa).

5-phospho-alpha-D-ribose 1-diphosphate contacts are provided by residues glycine 85, glycine 88–aspartate 89, serine 93, asparagine 95–threonine 98, lysine 113–serine 121, and threonine 125. Glycine 85 provides a ligand contact to anthranilate. Position 97 (serine 97) interacts with Mg(2+). Residue asparagine 116 coordinates anthranilate. Arginine 171 provides a ligand contact to anthranilate. Positions 229 and 230 each coordinate Mg(2+).

Belongs to the anthranilate phosphoribosyltransferase family. As to quaternary structure, homodimer. It depends on Mg(2+) as a cofactor.

The enzyme catalyses N-(5-phospho-beta-D-ribosyl)anthranilate + diphosphate = 5-phospho-alpha-D-ribose 1-diphosphate + anthranilate. The protein operates within amino-acid biosynthesis; L-tryptophan biosynthesis; L-tryptophan from chorismate: step 2/5. Its function is as follows. Catalyzes the transfer of the phosphoribosyl group of 5-phosphorylribose-1-pyrophosphate (PRPP) to anthranilate to yield N-(5'-phosphoribosyl)-anthranilate (PRA). The polypeptide is Anthranilate phosphoribosyltransferase (Saccharopolyspora erythraea (strain ATCC 11635 / DSM 40517 / JCM 4748 / NBRC 13426 / NCIMB 8594 / NRRL 2338)).